We begin with the raw amino-acid sequence, 966 residues long: Valine--tRNA ligase (966 aa).

Residues 48 to 58 carry the 'HIGH' region motif; the sequence is PNITGGLHLGH. Residues 348 to 368 are a coiled coil; that stretch reads DYKDARKKIIEECKRLKILED. Residues 566–570 carry the 'KMSKS' region motif; that stretch reads KMSKS. Lysine 569 provides a ligand contact to ATP. The stretch at 939 to 960 forms a coiled coil; the sequence is FKKSQEKLNHYNKTKNKLLNQY.

It belongs to the class-I aminoacyl-tRNA synthetase family. ValS type 1 subfamily. As to quaternary structure, monomer.

It is found in the cytoplasm. The enzyme catalyses tRNA(Val) + L-valine + ATP = L-valyl-tRNA(Val) + AMP + diphosphate. Its function is as follows. Catalyzes the attachment of valine to tRNA(Val). As ValRS can inadvertently accommodate and process structurally similar amino acids such as threonine, to avoid such errors, it has a 'posttransfer' editing activity that hydrolyzes mischarged Thr-tRNA(Val) in a tRNA-dependent manner. This Blochmanniella floridana protein is Valine--tRNA ligase.